The sequence spans 670 residues: Outer dynein arm-docking complex subunit 1 (670 aa).

Coiled coils occupy residues 9–155, 183–224, and 302–381; these read SKEV…RYLN, AVRE…EQLH, and NFIN…IQLL. Residues 454-473 form a disordered region; that stretch reads KMAPLQPPDTLEDPPGFEAS. Ser-517 carries the post-translational modification Phosphoserine. Disordered regions lie at residues 526 to 596 and 616 to 670; these read AGSS…ASSG and VGSS…DSRG. A compositionally biased stretch (polar residues) spans 584–596; it reads GHVTFGSTSASSG. The segment covering 650–670 has biased composition (low complexity); that stretch reads SSTGPASSTGPGSSTSKDSRG.

It belongs to the ODA1/DCC2 family. In terms of assembly, component of the outer dynein arm-docking complex along with ODAD2, ODAD3, ODAD4 and CLXN. Interacts with ODAD3. Interacts with ODAD4; this interaction may facilitate the recruitment and/or attachment of outer dynein arm docking complex proteins, including ODAD1, ODAD3, and ODAD4 to ciliary axonemes. Interacts with DNAH9. Interacts with MNS1. Interacts with PIERCE1 and PIERCE2; the interactions link the outer dynein arms docking complex (ODA-DC) to the internal microtubule inner proteins (MIP) in cilium axoneme. As to expression, expressed in nasal epithelial cells. Highly expressed in testis and also detected in lung, brain and kidney.

It is found in the cytoplasm. Its subcellular location is the cytoskeleton. It localises to the cilium axoneme. In terms of biological role, component of the outer dynein arm-docking complex (ODA-DC) that mediates outer dynein arms (ODA) binding onto the doublet microtubule. Involved in mediating assembly of both ODAs and their axonemal docking complex onto ciliary microtubules. The chain is Outer dynein arm-docking complex subunit 1 from Homo sapiens (Human).